The chain runs to 715 residues: NADH-ubiquinone oxidoreductase chain 5 (715 aa).

A run of 17 helical transmembrane segments spans residues 1–21 (MYLS…FFGR), 30–50 (LITC…FFEV), 81–101 (LTVA…IYSI), 119–139 (LFTF…MFVG), 140–160 (WEGV…RIAA), 177–197 (FLTI…YATV), 200–220 (LAPY…LIGA), 241–261 (TPVS…YLLM), 274–294 (LLLC…IGLF), 310–330 (LGMM…FHLI), 331–351 (NHAF…HAVA), 366–386 (LPLT…FPYM), 403–423 (FSFS…FTTL), 487–507 (GFFL…FGFI), 543–563 (TLFK…ALVL), 647–667 (IVTN…FTFI), and 668–688 (SLLE…LSLT).

This sequence belongs to the complex I subunit 5 family.

Its subcellular location is the mitochondrion inner membrane. It catalyses the reaction a ubiquinone + NADH + 5 H(+)(in) = a ubiquinol + NAD(+) + 4 H(+)(out). Its function is as follows. Core subunit of the mitochondrial membrane respiratory chain NADH dehydrogenase (Complex I) that is believed to belong to the minimal assembly required for catalysis. Complex I functions in the transfer of electrons from NADH to the respiratory chain. The immediate electron acceptor for the enzyme is believed to be ubiquinone. This is NADH-ubiquinone oxidoreductase chain 5 (ndh-5) from Neurospora crassa (strain ATCC 24698 / 74-OR23-1A / CBS 708.71 / DSM 1257 / FGSC 987).